Reading from the N-terminus, the 274-residue chain is Large ribosomal subunit protein uL2cy (274 aa).

Disordered regions lie at residues 1-20 (MAIH…AVDS) and 224-274 (NPVD…RRSK).

It belongs to the universal ribosomal protein uL2 family. As to quaternary structure, part of the 50S ribosomal subunit.

Its subcellular location is the plastid. The protein resides in the chloroplast. The chain is Large ribosomal subunit protein uL2cy (rpl2-B) from Populus alba (White poplar).